A 343-amino-acid polypeptide reads, in one-letter code: NADH-quinone oxidoreductase subunit H (343 aa).

Helical transmembrane passes span 5–25 (FIIE…LMAM), 76–96 (FLFV…SAVI), 119–139 (ALLY…IGGW), 158–178 (VSYE…TGTL), 190–210 (MNWN…CAFA), 243–263 (LFAE…LFFG), 284–304 (ILGF…YMWV), and 323–343 (ILIP…LLFK).

Belongs to the complex I subunit 1 family. In terms of assembly, NDH-1 is composed of 14 different subunits. Subunits NuoA, H, J, K, L, M, N constitute the membrane sector of the complex.

It is found in the cell inner membrane. It catalyses the reaction a quinone + NADH + 5 H(+)(in) = a quinol + NAD(+) + 4 H(+)(out). NDH-1 shuttles electrons from NADH, via FMN and iron-sulfur (Fe-S) centers, to quinones in the respiratory chain. The immediate electron acceptor for the enzyme in this species is believed to be ubiquinone. Couples the redox reaction to proton translocation (for every two electrons transferred, four hydrogen ions are translocated across the cytoplasmic membrane), and thus conserves the redox energy in a proton gradient. This subunit may bind ubiquinone. This Flavobacterium psychrophilum (strain ATCC 49511 / DSM 21280 / CIP 103535 / JIP02/86) protein is NADH-quinone oxidoreductase subunit H.